We begin with the raw amino-acid sequence, 21 residues long: Basic phospholipase A2 BjIV (21 aa).

It belongs to the phospholipase A2 family. Group II subfamily. Can form dimers, trimers and tetramers. Requires Ca(2+) as cofactor. In terms of processing, contains seven disulfide bonds. In terms of tissue distribution, expressed by the venom gland.

The protein resides in the secreted. The enzyme catalyses a 1,2-diacyl-sn-glycero-3-phosphocholine + H2O = a 1-acyl-sn-glycero-3-phosphocholine + a fatty acid + H(+). Inhibited by crotapotin. Its function is as follows. Snake venom phospholipase A2 has a high enzymatic activity and produces moderate myonecrosis in skeletal muscle, but shows no neuromuscular activity in mouse phrenic nerve-diaphragm preparations. PLA2 catalyzes the calcium-dependent hydrolysis of the 2-acyl groups in 3-sn-phosphoglycerides. This chain is Basic phospholipase A2 BjIV, found in Bothrops jararacussu (Jararacussu).